Consider the following 106-residue polypeptide: Nucleoid-associated protein Smal_0858 (106 aa).

The segment at 81–106 is disordered; it reads IDAESKSKMGSATAGMQLPPGMKLPF.

It belongs to the YbaB/EbfC family. Homodimer.

It localises to the cytoplasm. It is found in the nucleoid. Binds to DNA and alters its conformation. May be involved in regulation of gene expression, nucleoid organization and DNA protection. This Stenotrophomonas maltophilia (strain R551-3) protein is Nucleoid-associated protein Smal_0858.